Here is a 225-residue protein sequence, read N- to C-terminus: Adenylate kinase (225 aa).

An ATP-binding site is contributed by Gly10–Thr15. An NMP region spans residues Glu30–Val59. Residues Ser31, Arg36, Asp57 to Val59, Gly85 to Arg88, and Gln92 each bind AMP. An LID region spans residues Gly126–Asp165. Arg127 contacts ATP. Residues Arg162 and Arg174 each coordinate AMP. Pro211 is an ATP binding site.

This sequence belongs to the adenylate kinase family. Monomer.

The protein localises to the cytoplasm. It carries out the reaction AMP + ATP = 2 ADP. It participates in purine metabolism; AMP biosynthesis via salvage pathway; AMP from ADP: step 1/1. Catalyzes the reversible transfer of the terminal phosphate group between ATP and AMP. Plays an important role in cellular energy homeostasis and in adenine nucleotide metabolism. The polypeptide is Adenylate kinase (Desulfatibacillum aliphaticivorans).